Consider the following 552-residue polypeptide: CTP synthase (552 aa).

Residues 1–265 form an amidoligase domain region; sequence MTKYIFITGG…DEIVVRKLRL (265 aa). A CTP-binding site is contributed by Ser-13. Ser-13 contributes to the UTP binding site. ATP contacts are provided by residues 14 to 19 and Asp-71; that span reads SLGKGI. Asp-71 and Glu-139 together coordinate Mg(2+). Residues 146–148, 186–191, and Lys-222 each bind CTP; these read DIE and KTKPTQ. Residues 186–191 and Lys-222 each bind UTP; that span reads KTKPTQ. The region spanning 290–541 is the Glutamine amidotransferase type-1 domain; sequence TVAMVGKYVN…VRAARARSEG (252 aa). Gly-351 is a binding site for L-glutamine. Cys-378 serves as the catalytic Nucleophile; for glutamine hydrolysis. L-glutamine is bound by residues 379 to 382, Glu-402, and Arg-469; that span reads LGMQ. Catalysis depends on residues His-514 and Glu-516.

The protein belongs to the CTP synthase family. Homotetramer.

The catalysed reaction is UTP + L-glutamine + ATP + H2O = CTP + L-glutamate + ADP + phosphate + 2 H(+). It carries out the reaction L-glutamine + H2O = L-glutamate + NH4(+). It catalyses the reaction UTP + NH4(+) + ATP = CTP + ADP + phosphate + 2 H(+). It functions in the pathway pyrimidine metabolism; CTP biosynthesis via de novo pathway; CTP from UDP: step 2/2. Its activity is regulated as follows. Allosterically activated by GTP, when glutamine is the substrate; GTP has no effect on the reaction when ammonia is the substrate. The allosteric effector GTP functions by stabilizing the protein conformation that binds the tetrahedral intermediate(s) formed during glutamine hydrolysis. Inhibited by the product CTP, via allosteric rather than competitive inhibition. Catalyzes the ATP-dependent amination of UTP to CTP with either L-glutamine or ammonia as the source of nitrogen. Regulates intracellular CTP levels through interactions with the four ribonucleotide triphosphates. In Methylococcus capsulatus (strain ATCC 33009 / NCIMB 11132 / Bath), this protein is CTP synthase.